We begin with the raw amino-acid sequence, 361 residues long: 3-dehydroquinate synthase (361 aa).

NAD(+) is bound by residues 105–109 (GVIGD), 129–130 (TT), Lys142, Lys151, and 169–172 (FLST). The Zn(2+) site is built by Glu184, His247, and His264.

It belongs to the sugar phosphate cyclases superfamily. Dehydroquinate synthase family. Co(2+) is required as a cofactor. It depends on Zn(2+) as a cofactor. Requires NAD(+) as cofactor.

The protein resides in the cytoplasm. It carries out the reaction 7-phospho-2-dehydro-3-deoxy-D-arabino-heptonate = 3-dehydroquinate + phosphate. It functions in the pathway metabolic intermediate biosynthesis; chorismate biosynthesis; chorismate from D-erythrose 4-phosphate and phosphoenolpyruvate: step 2/7. Its function is as follows. Catalyzes the conversion of 3-deoxy-D-arabino-heptulosonate 7-phosphate (DAHP) to dehydroquinate (DHQ). This is 3-dehydroquinate synthase from Endomicrobium trichonymphae.